Reading from the N-terminus, the 430-residue chain is Trigger factor (430 aa).

In terms of domain architecture, PPIase FKBP-type spans 157–242 (GDLVALETWS…AVEVSEPVLP (86 aa)).

Belongs to the FKBP-type PPIase family. Tig subfamily.

It is found in the cytoplasm. It carries out the reaction [protein]-peptidylproline (omega=180) = [protein]-peptidylproline (omega=0). In terms of biological role, involved in protein export. Acts as a chaperone by maintaining the newly synthesized protein in an open conformation. Functions as a peptidyl-prolyl cis-trans isomerase. This Xanthomonas campestris pv. campestris (strain ATCC 33913 / DSM 3586 / NCPPB 528 / LMG 568 / P 25) protein is Trigger factor.